Reading from the N-terminus, the 1588-residue chain is Multicopy suppressor of chk1 protein 1 (1588 aa).

Residues 38–60 are disordered; sequence HAKPSTQQQQQQQNISNETTSTG. The span at 51 to 60 shows a compositional bias: polar residues; sequence NISNETTSTG. One can recognise a JmjN domain in the interval 82 to 124; that stretch reads NVRVTPKKEEFSRGLDFISDLYDQTARKSGAVRVIPPDNWKCP. The segment at 298 to 345 adopts a PHD-type 1 zinc-finger fold; it reads KCKLCAQEGSSLVTCCICQSNYHYACVEAPFAPFSDIHYWTCNSCIPS. Over residues 385 to 395 the composition is skewed to polar residues; the sequence is PLTLPSNTKTP. Positions 385–412 are disordered; that stretch reads PLTLPSNTKTPPASARQSSRRTRSTSGK. One can recognise a JmjC domain in the interval 475-645; sequence FPTSRQNAYY…DMHAENSFNM (171 aa). Residues 848–872 are disordered; the sequence is EKRKPKRGSATHSHLESPSEEVEDL. The PHD-type 2 zinc-finger motif lies at 1171–1220; it reads FHYCFCRQPEAGMMIECELCHEWYHAKCMKMSKKKLRADEKFICPICDYR. Residues 1319-1341 are disordered; that stretch reads APQPPPFIGESRSNRKPRPTKRQ. The PHD-type 3 zinc finger occupies 1454–1505; it reads SVICLCRQPFAISDGTVQCHNCLEWFHYECVGLSSDIVSTLSNYACPDCCSK.

Its subcellular location is the nucleus. Has a role in regulating chromatin structure via global deacetylation of histone H3. This function is associated with the activity of a histone deacetylase. This is Multicopy suppressor of chk1 protein 1 (msc1) from Schizosaccharomyces pombe (strain 972 / ATCC 24843) (Fission yeast).